The chain runs to 208 residues: Small ribosomal subunit protein uS9c (208 aa).

The transit peptide at 1–51 directs the protein to the chloroplast; it reads MAVSISSLTSSFASLSFTSNLTPKPQTLPMARTKPFSLSNPAVVKPLVITA. Residue T52 is modified to N-acetylthreonine. A disordered region spans residues 185-208; sequence DSRIVERKKPGLKKARKAPQFSKR. Positions 194–208 are enriched in basic residues; that stretch reads PGLKKARKAPQFSKR.

As to quaternary structure, component of the chloroplast small ribosomal subunit (SSU). Mature 70S chloroplast ribosomes of higher plants consist of a small (30S) and a large (50S) subunit. The 30S small subunit contains 1 molecule of ribosomal RNA (16S rRNA) and 24 different proteins. The 50S large subunit contains 3 rRNA molecules (23S, 5S and 4.5S rRNA) and 33 different proteins. uS9c binds directly to 16S ribosomal RNA. uS9c interacts with translation factor pY (PSRP1).

The protein localises to the plastid. It localises to the chloroplast. In terms of biological role, component of the chloroplast ribosome (chloro-ribosome), a dedicated translation machinery responsible for the synthesis of chloroplast genome-encoded proteins, including proteins of the transcription and translation machinery and components of the photosynthetic apparatus. The protein is Small ribosomal subunit protein uS9c (PRPS9) of Spinacia oleracea (Spinach).